A 692-amino-acid polypeptide reads, in one-letter code: Elongation factor G (692 aa).

The tr-type G domain occupies 8-282 (AKTRNIGIMA…AVIAYLPSPL (275 aa)). GTP contacts are provided by residues 17 to 24 (AHVDAGKT), 81 to 85 (DTPGH), and 135 to 138 (NKMD).

The protein belongs to the TRAFAC class translation factor GTPase superfamily. Classic translation factor GTPase family. EF-G/EF-2 subfamily.

It localises to the cytoplasm. Catalyzes the GTP-dependent ribosomal translocation step during translation elongation. During this step, the ribosome changes from the pre-translocational (PRE) to the post-translocational (POST) state as the newly formed A-site-bound peptidyl-tRNA and P-site-bound deacylated tRNA move to the P and E sites, respectively. Catalyzes the coordinated movement of the two tRNA molecules, the mRNA and conformational changes in the ribosome. The polypeptide is Elongation factor G (Streptococcus equi subsp. equi (strain 4047)).